The sequence spans 391 residues: Na(+)/H(+) antiporter NhaA (391 aa).

11 helical membrane-spanning segments follow: residues 14 to 34, 59 to 79, 95 to 115, 125 to 145, 154 to 174, 180 to 200, 219 to 239, 254 to 274, 292 to 312, 328 to 348, and 357 to 377; these read GGIILIIAAAAAMVFANLGAT, MLLWINDALMAVFFLLVGLEV, AFPVIAAIGGMVVPALLYLAF, GWAIPAATDIAFALGVLALLG, IFLMALAIIDDLGAIVIIALF, SILSLSVAAGAIAALALLNIF, VLKSGVHATLAGVIIGFFIPL, VLHPWVAFMILPLFAFANAGV, IIAGLFIGKPLGISLFCWLAL, IMAVGVLCGIGFTMSIFISTL, and LIVWAKLGILTGSLLAAFVGY.

This sequence belongs to the NhaA Na(+)/H(+) (TC 2.A.33) antiporter family.

The protein resides in the cell inner membrane. The catalysed reaction is Na(+)(in) + 2 H(+)(out) = Na(+)(out) + 2 H(+)(in). Its function is as follows. Na(+)/H(+) antiporter that extrudes sodium in exchange for external protons. The chain is Na(+)/H(+) antiporter NhaA from Enterobacter sp. (strain 638).